Here is a 167-residue protein sequence, read N- to C-terminus: Large ribosomal subunit protein uL10 (167 aa).

Belongs to the universal ribosomal protein uL10 family. As to quaternary structure, part of the ribosomal stalk of the 50S ribosomal subunit. The N-terminus interacts with L11 and the large rRNA to form the base of the stalk. The C-terminus forms an elongated spine to which L12 dimers bind in a sequential fashion forming a multimeric L10(L12)X complex.

Forms part of the ribosomal stalk, playing a central role in the interaction of the ribosome with GTP-bound translation factors. The sequence is that of Large ribosomal subunit protein uL10 from Flavobacterium johnsoniae (strain ATCC 17061 / DSM 2064 / JCM 8514 / BCRC 14874 / CCUG 350202 / NBRC 14942 / NCIMB 11054 / UW101) (Cytophaga johnsonae).